The sequence spans 233 residues: Protein Thf1 (233 aa).

The stretch at 183 to 205 (DKLSKDLELYRSNLDKMTQALAV) forms a coiled coil. The segment at 213 to 233 (DRKKREQRQQQASTPVAPPNE) is disordered.

Belongs to the THF1 family.

May be involved in photosynthetic membrane biogenesis. This is Protein Thf1 from Trichormus variabilis (strain ATCC 29413 / PCC 7937) (Anabaena variabilis).